A 511-amino-acid chain; its full sequence is GMP synthase [glutamine-hydrolyzing] (511 aa).

Positions aspartate 5 to threonine 195 constitute a Glutamine amidotransferase type-1 domain. Cysteine 82 acts as the Nucleophile in catalysis. Active-site residues include histidine 169 and glutamate 171. The 191-residue stretch at tryptophan 196–arginine 386 folds into the GMPS ATP-PPase domain. Serine 223 to serine 229 is an ATP binding site.

Homodimer.

It catalyses the reaction XMP + L-glutamine + ATP + H2O = GMP + L-glutamate + AMP + diphosphate + 2 H(+). It participates in purine metabolism; GMP biosynthesis; GMP from XMP (L-Gln route): step 1/1. Its function is as follows. Catalyzes the synthesis of GMP from XMP. This chain is GMP synthase [glutamine-hydrolyzing], found in Campylobacter hominis (strain ATCC BAA-381 / DSM 21671 / CCUG 45161 / LMG 19568 / NCTC 13146 / CH001A).